The sequence spans 841 residues: Auxin response factor 24 (841 aa).

Residues Leu109–Thr140 form a disordered region. A DNA-binding region (TF-B3) is located at residues Phe148–Met250. 3 disordered regions span residues Pro366–Arg397, Gln663–Cys715, and Gly804–Cys841. Residues Ala684–Ser695 show a composition bias toward basic and acidic residues. Composition is skewed to polar residues over residues Lys701–Arg713 and Gly830–Cys841. Residues Arg713–Glu797 enclose the PB1 domain.

It belongs to the ARF family. As to quaternary structure, homodimers and heterodimers. As to expression, expressed in roots, culms, leaves and young panicles.

It is found in the nucleus. Functionally, auxin response factors (ARFs) are transcriptional factors that bind specifically to the DNA sequence 5'-TGTCTC-3' found in the auxin-responsive promoter elements (AuxREs). The protein is Auxin response factor 24 (ARF24) of Oryza sativa subsp. japonica (Rice).